Reading from the N-terminus, the 168-residue chain is Photosystem I assembly protein Ycf3 (168 aa).

TPR repeat units follow at residues 35–68 (AFTY…EIDP), 72–105 (SYIL…NPFL), and 120–153 (GEQA…TPGN).

This sequence belongs to the Ycf3 family.

The protein localises to the plastid. It localises to the chloroplast thylakoid membrane. Its function is as follows. Essential for the assembly of the photosystem I (PSI) complex. May act as a chaperone-like factor to guide the assembly of the PSI subunits. The polypeptide is Photosystem I assembly protein Ycf3 (Amborella trichopoda).